Consider the following 252-residue polypeptide: Mitochondrial cardiolipin hydrolase (252 aa).

Topologically, residues 1 to 4 are mitochondrial intermembrane; sequence MGRL. Residues 1–39 are required for mitochondrial localization; the sequence is MGRLSWQVAAAAAVGLALTLEALPWVLRWLRSRRRRPRR. The chain crosses the membrane as a helical span at residues 5–27; that stretch reads SWQVAAAAAVGLALTLEALPWVL. The Cytoplasmic segment spans residues 28–252; it reads RWLRSRRRRP…TCGTSSESQT (225 aa). Residues 45 to 78 form a C3H1-type; atypical zinc finger; that stretch reads PSQVTCTEALLRAPGAELAELPEGCPCGLPHGES. The PLD phosphodiesterase domain maps to 151-178; the sequence is DPGYMHHKFAIVDKRVLITGSLNWTTQA. Active-site residues include histidine 156, lysine 158, and aspartate 163.

This sequence belongs to the phospholipase D family. MitoPLD/Zucchini subfamily. In terms of assembly, homodimer. Interacts with MOV10L1. Interacts with MIGA1 and MIGA2; possibly facilitating homodimer formation. Interacts with GK2. Predominantly expressed in testis and ovary, but not limited to gonads (at protein level). It is also found in brain, heart, pituitary gland, prostate, pancreas, thyroid, bone marrow, lung and muscle.

Its subcellular location is the mitochondrion outer membrane. The protein resides in the golgi apparatus. It carries out the reaction a cardiolipin + H2O = a 1,2-diacyl-sn-glycero-3-phospho-(1'-sn-glycerol) + a 1,2-diacyl-sn-glycero-3-phosphate + H(+). With respect to regulation, MYC stimulates its phospholipase activity. MIGA1 and MIGA2 increase PLD6 self-association affinity and affects the homodimer conformation facilitating its phospholipase activity over the nuclease activity. Single stranded DNA (ssDNA) hydrolase activity does not depend upon, but is stimulated by the presence of Ca(2+) and Mn(2+). Its function is as follows. Presents phospholipase and nuclease activities, depending on the different physiological conditions. Interaction with Mitoguardin (MIGA1 or MIGA2) affects the dimer conformation, facilitating the lipase activity over the nuclease activity. Plays a key role in mitochondrial fusion and fission via its phospholipase activity. In its phospholipase role, it uses the mitochondrial lipid cardiolipin as substrate to generate phosphatidate (PA or 1,2-diacyl-sn-glycero-3-phosphate), a second messenger signaling lipid. Production of PA facilitates Mitofusin-mediated fusion, whereas the cleavage of PA by the Lipin family of phosphatases produces diacylgycerol (DAG) which promotes mitochondrial fission. Both Lipin and DAG regulate mitochondrial dynamics and membrane fusion/fission, important processes for adapting mitochondrial metabolism to changes in cell physiology. Mitochondrial fusion enables cells to cope with the increased nucleotide demand during DNA synthesis. Mitochondrial function and dynamics are closely associated with biological processes such as cell growth, proliferation, and differentiation. Mediator of MYC activity, promotes mitochondrial fusion and activates AMPK which in turn inhibits YAP/TAZ, thereby inducing cell growth and proliferation. The endonuclease activity plays a critical role in PIWI-interacting RNA (piRNA) biogenesis during spermatogenesis. Implicated in spermatogenesis and sperm fertility in testicular germ cells, its single strand-specific nuclease activity is critical for the biogenesis/maturation of PIWI-interacting RNA (piRNA). MOV10L1 selectively binds to piRNA precursors and funnels them to the endonuclease that catalyzes the first cleavage step of piRNA processing to generate piRNA intermediate fragments that are subsequently loaded to Piwi proteins. Cleaves either DNA or RNA substrates with similar affinity, producing a 5' phosphate end, in this way it participates in the processing of primary piRNA transcripts. piRNAs provide essential protection against the activity of mobile genetic elements. piRNA-mediated transposon silencing is thus critical for maintaining genome stability, in particular in germline cells when transposons are mobilized as a consequence of wide-spread genomic demethylation. PA may act as signaling molecule in the recognition/transport of the precursor RNAs of primary piRNAs. Interacts with tesmin in testes, suggesting a role in spermatogenesis via association with its interacting partner. This Homo sapiens (Human) protein is Mitochondrial cardiolipin hydrolase (PLD6).